The primary structure comprises 492 residues: Endoglucanase 15 (492 aa).

The first 30 residues, methionine 1–alanine 30, serve as a signal peptide directing secretion. Aspartate 86 (nucleophile) is an active-site residue. Active-site residues include histidine 414, aspartate 466, and glutamate 475.

It belongs to the glycosyl hydrolase 9 (cellulase E) family.

It is found in the secreted. It carries out the reaction Endohydrolysis of (1-&gt;4)-beta-D-glucosidic linkages in cellulose, lichenin and cereal beta-D-glucans.. This is Endoglucanase 15 from Arabidopsis thaliana (Mouse-ear cress).